A 662-amino-acid chain; its full sequence is Envelope glycoprotein (662 aa).

The signal sequence occupies residues 1-34 (MEGPTHPKPSKDKTFSWDLMILVGVLLRLDVGMA). Topologically, residues 35–606 (NPSPHQIYNV…FNKSPWFTTL (572 aa)) are extracellular. Asn-43 and Asn-58 each carry an N-linked (GlcNAc...) asparagine; by host glycan. Intrachain disulfides connect Cys-115–Cys-132 and Cys-124–Cys-137. The tract at residues 251-281 (VLPDQKPPSRQSQIESRVTPHHSQGNGGTPG) is disordered. Residues 258–274 (PSRQSQIESRVTPHHSQ) are compositionally biased toward polar residues. Residues Asn-286, Asn-322, and Asn-327 are each glycosylated (N-linked (GlcNAc...) asparagine; by host). Cystine bridges form between Cys-332/Cys-335, Cys-332/Cys-559, and Cys-551/Cys-558. The CXXC motif lies at 332 to 335 (CWLC). N-linked (GlcNAc...) asparagine; by host glycosylation is found at Asn-351, Asn-354, and Asn-430. The fusion peptide stretch occupies residues 468 to 488 (ISLTVALMLGGLTVGGIAAGV). Coiled-coil stretches lie at residues 496–545 (LETA…ILFL) and 555–591 (KEECCFYADHTGLVRDNMAKLRERLKQRQQLFDSQQG). Residues 534-550 (LQNRRGLDILFLQEGGL) form an immunosuppression region. The CX6CC motif lies at 551–559 (CAALKEECC). A helical transmembrane segment spans residues 607-627 (ISSIMGPLLILLLILLFGPCI). Residue Cys-626 is the site of S-palmitoyl cysteine; by host attachment. At 628 to 662 (LNRLVQFVKDRISVVQALILTQQYQQIKQYDPDQP) the chain is on the cytoplasmic side.

The mature envelope protein (Env) consists of a trimer of SU-TM heterodimers attached by a labile interchain disulfide bond. In terms of processing, specific enzymatic cleavages in vivo yield mature proteins. Envelope glycoproteins are synthesized as an inactive precursor that is N-glycosylated and processed likely by host cell furin or by a furin-like protease in the Golgi to yield the mature SU and TM proteins. The cleavage site between SU and TM requires the minimal sequence [KR]-X-[KR]-R. The R-peptide is released from the C-terminus of the cytoplasmic tail of the TM protein upon particle formation as a result of proteolytic cleavage by the viral protease. Cleavage of this peptide is required for TM to become fusogenic. The CXXC motif is highly conserved across a broad range of retroviral envelope proteins. It is thought to participate in the formation of a labile disulfide bond possibly with the CX6CC motif present in the transmembrane protein. Isomerization of the intersubunit disulfide bond to an SU intrachain disulfide bond is thought to occur upon receptor recognition in order to allow membrane fusion. Post-translationally, the transmembrane protein is palmitoylated. In terms of processing, the R-peptide is palmitoylated.

Its subcellular location is the virion membrane. The protein resides in the host cell membrane. In terms of biological role, the surface protein (SU) attaches the virus to the host cell by binding to its receptor. This interaction triggers the refolding of the transmembrane protein (TM) and is thought to activate its fusogenic potential by unmasking its fusion peptide. Fusion occurs at the host cell plasma membrane. Functionally, the transmembrane protein (TM) acts as a class I viral fusion protein. Under the current model, the protein has at least 3 conformational states: pre-fusion native state, pre-hairpin intermediate state, and post-fusion hairpin state. During viral and target cell membrane fusion, the coiled coil regions (heptad repeats) assume a trimer-of-hairpins structure, positioning the fusion peptide in close proximity to the C-terminal region of the ectodomain. The formation of this structure appears to drive apposition and subsequent fusion of viral and target cell membranes. Membranes fusion leads to delivery of the nucleocapsid into the cytoplasm. The protein is Envelope glycoprotein (env) of Felis catus (Cat).